A 366-amino-acid polypeptide reads, in one-letter code: Spermine synthase (366 aa).

Ala2 carries the post-translational modification N-acetylalanine. The residue at position 57 (Ser57) is a Phosphoserine. The 241-residue stretch at 122-362 (RYWPTADGRL…ELWVFYTVWK (241 aa)) folds into the PABS domain. Gln148 provides a ligand contact to S-adenosyl 3-(methylsulfanyl)propylamine. Positions 177 and 201 each coordinate spermidine. S-adenosyl 3-(methylsulfanyl)propylamine-binding positions include Glu220 and 255-256 (DC). Asp276 serves as the catalytic Proton acceptor. Residues Tyr351 and Glu353 each contribute to the spermidine site.

Belongs to the spermidine/spermine synthase family. In terms of assembly, homodimer. Dimerization is mediated through the N-terminal domain and seems to be required for activity as deletion of the N-terminal domain causes complete loss of activity.

It carries out the reaction S-adenosyl 3-(methylsulfanyl)propylamine + spermidine = spermine + S-methyl-5'-thioadenosine + H(+). It participates in amine and polyamine biosynthesis; spermine biosynthesis; spermine from spermidine: step 1/1. In terms of biological role, catalyzes the production of spermine from spermidine and decarboxylated S-adenosylmethionine (dcSAM). The protein is Spermine synthase of Homo sapiens (Human).